The sequence spans 314 residues: Protoheme IX farnesyltransferase 2 (314 aa).

Helical transmembrane passes span 32–49, 54–76, 98–118, 120–140, 153–173, 180–200, 226–246, 249–269, and 285–305; these read VMSLVVFTAFVGLVAAPV, LLAVIAILSIAIGAGASGALNMW, IQPHEALSFGLVLSVLSVMTL, VLVNWLSATLLAFTIFFYAVV, IVIGGAAGAIPPVIGWAAVTG, IVLFLIIFLWTPPHFWALALF, IFAYALVLAPVGVAPWLLGYT, FYGVAAMLLGLGFVWYAWKVL, and FAYSLLYLFAIFAAYLADSVV.

The protein belongs to the UbiA prenyltransferase family. Protoheme IX farnesyltransferase subfamily.

Its subcellular location is the cell inner membrane. The catalysed reaction is heme b + (2E,6E)-farnesyl diphosphate + H2O = Fe(II)-heme o + diphosphate. It functions in the pathway porphyrin-containing compound metabolism; heme O biosynthesis; heme O from protoheme: step 1/1. In terms of biological role, converts heme B (protoheme IX) to heme O by substitution of the vinyl group on carbon 2 of heme B porphyrin ring with a hydroxyethyl farnesyl side group. This chain is Protoheme IX farnesyltransferase 2, found in Mesorhizobium japonicum (strain LMG 29417 / CECT 9101 / MAFF 303099) (Mesorhizobium loti (strain MAFF 303099)).